Reading from the N-terminus, the 947-residue chain is Bifunctional glutamine synthetase adenylyltransferase/adenylyl-removing enzyme (947 aa).

Residues 1-440 (MTPLSSPLSQ…VFNELIGDDE (440 aa)) are adenylyl removase. Positions 450-947 (SEPWREVWQD…ASWRKWLVAV (498 aa)) are adenylyl transferase.

Belongs to the GlnE family. The cofactor is Mg(2+).

The catalysed reaction is [glutamine synthetase]-O(4)-(5'-adenylyl)-L-tyrosine + phosphate = [glutamine synthetase]-L-tyrosine + ADP. The enzyme catalyses [glutamine synthetase]-L-tyrosine + ATP = [glutamine synthetase]-O(4)-(5'-adenylyl)-L-tyrosine + diphosphate. Functionally, involved in the regulation of glutamine synthetase GlnA, a key enzyme in the process to assimilate ammonia. When cellular nitrogen levels are high, the C-terminal adenylyl transferase (AT) inactivates GlnA by covalent transfer of an adenylyl group from ATP to specific tyrosine residue of GlnA, thus reducing its activity. Conversely, when nitrogen levels are low, the N-terminal adenylyl removase (AR) activates GlnA by removing the adenylyl group by phosphorolysis, increasing its activity. The regulatory region of GlnE binds the signal transduction protein PII (GlnB) which indicates the nitrogen status of the cell. This Salmonella newport (strain SL254) protein is Bifunctional glutamine synthetase adenylyltransferase/adenylyl-removing enzyme.